Here is a 552-residue protein sequence, read N- to C-terminus: Membrane protein insertase YidC (552 aa).

A helical transmembrane segment spans residues 3-23 (TKRLILFVIFSFSILMLWDSW). Residues 29-65 (PPAASQTQTTAQSVEDGSVPQAAKSSASAANQASVPA) form a disordered region. 4 helical membrane-spanning segments follow: residues 359–379 (WGVA…PLSA), 429–449 (LPIL…LGSV), 463–483 (LSAV…MIIQ), and 503–523 (PIVF…YWLV).

Belongs to the OXA1/ALB3/YidC family. Type 1 subfamily. In terms of assembly, interacts with the Sec translocase complex via SecD. Specifically interacts with transmembrane segments of nascent integral membrane proteins during membrane integration.

Its subcellular location is the cell inner membrane. Its function is as follows. Required for the insertion and/or proper folding and/or complex formation of integral membrane proteins into the membrane. Involved in integration of membrane proteins that insert both dependently and independently of the Sec translocase complex, as well as at least some lipoproteins. Aids folding of multispanning membrane proteins. The sequence is that of Membrane protein insertase YidC from Methylobacillus flagellatus (strain ATCC 51484 / DSM 6875 / VKM B-1610 / KT).